Consider the following 130-residue polypeptide: Ribonuclease P protein component (130 aa).

Belongs to the RnpA family. In terms of assembly, consists of a catalytic RNA component (M1 or rnpB) and a protein subunit.

It catalyses the reaction Endonucleolytic cleavage of RNA, removing 5'-extranucleotides from tRNA precursor.. Functionally, RNaseP catalyzes the removal of the 5'-leader sequence from pre-tRNA to produce the mature 5'-terminus. It can also cleave other RNA substrates such as 4.5S RNA. The protein component plays an auxiliary but essential role in vivo by binding to the 5'-leader sequence and broadening the substrate specificity of the ribozyme. In Psychrobacter sp. (strain PRwf-1), this protein is Ribonuclease P protein component.